The following is a 618-amino-acid chain: Matrix metalloproteinase-24 (618 aa).

An N-terminal signal peptide occupies residues 1–41 (MPRSRGGRAAPGQAARWSGWRAPGRLLPLLPALCCLAAAAG). Residues 42–128 (AGKPAGADAP…HLSRRRRNKR (87 aa)) constitute a propeptide that is removed on maturation. Topologically, residues 42-575 (AGKPAGADAP…IDDVPGSVNA (534 aa)) are extracellular. The short motif at 110 to 117 (PRCGVPDH) is the Cysteine switch element. Zn(2+) is bound by residues cysteine 112 and histidine 255. Glutamate 256 is an active-site residue. Zn(2+) is bound by residues histidine 259 and histidine 265. Residues 296–352 (QKIYGPPAEPLEPTRPLPTLPVRRIHSPSERKHERQPRPPRPPLGDRPSTPGAKPNI) form a disordered region. The span at 302–314 (PAEPLEPTRPLPT) shows a compositional bias: pro residues. Positions 322-332 (SPSERKHERQP) are enriched in basic and acidic residues. Hemopexin repeat units follow at residues 350-398 (PNIC…WKGL), 399-444 (PARI…GSCL), 446-494 (REGI…KGIP), and 495-542 (QAPQ…WMGC). Cysteine 353 and cysteine 542 are joined by a disulfide. Residues 576–596 (VAVVVPCTLSLCLLVLLYTIF) traverse the membrane as a helical segment. Topologically, residues 597–618 (QFKNKTGPQPVTYYKRPVQEWV) are cytoplasmic. Positions 616–618 (EWV) match the PDZ-binding motif.

It belongs to the peptidase M10A family. In terms of assembly, interacts (via PDZ-binding motif) with APBA3 (via PDZ domain). Interacts with GRIP1 and GRIP2. Requires Zn(2+) as cofactor. Ca(2+) is required as a cofactor. Cleaved by a furin endopeptidase in the trans-Golgi network. As to expression, predominantly expressed in the nervous system: while enriched in the central nervous system, expression is also detected in the peripheral nervous system, including the trigeminal ganglion. Expression is not restricted to the nervous system: it is also enriched in the thymus, with a lower level of expression present in the aorta. In brain, high expression is present in the brain parenchyma, particularly within the neocortex.

The protein localises to the cell membrane. It localises to the golgi apparatus. The protein resides in the trans-Golgi network membrane. It is found in the secreted. Its subcellular location is the extracellular space. The protein localises to the extracellular matrix. Its function is as follows. Metalloprotease that mediates cleavage of N-cadherin (CDH2) and acts as a regulator of neuro-immune interactions and neural stem cell quiescence. Involved in cell-cell interactions between nociceptive neurites and mast cells, possibly by mediating cleavage of CDH2, thereby acting as a mediator of peripheral thermal nociception and inflammatory hyperalgesia. Key regulator of neural stem cells quiescence by mediating cleavage of CDH2, affecting CDH2-mediated anchorage of neural stem cells to ependymocytes in the adult subependymal zone, leading to modulate their quiescence. May play a role in axonal growth. Able to activate progelatinase A. May also be a proteoglycanase involved in degradation of proteoglycans, such as dermatan sulfate and chondroitin sulfate proteoglycans. Cleaves partially fibronectin, but not collagen type I, nor laminin. This Rattus norvegicus (Rat) protein is Matrix metalloproteinase-24 (Mmp24).